The sequence spans 211 residues: MAKGIIGKKLGMTQIFDDDGNVIPVTVVQAGPCVVIQKKVEERDGYNALQVGFEDVPEHRVNKPLKGHFERAGVKPKKHVKEFMDFPEDLNEGDEITVDIFEEGELVDVTGISKGKGFAGTIKRWNFSRGPMSHGSRFHRAPGSIGAVDASRVFKGQKLPGRMGHDRVTIQNLEVVRVDSEKNLLLIKGSVPGPNKGILTIREAVKKASNA.

This sequence belongs to the universal ribosomal protein uL3 family. In terms of assembly, part of the 50S ribosomal subunit. Forms a cluster with proteins L14 and L19.

Its function is as follows. One of the primary rRNA binding proteins, it binds directly near the 3'-end of the 23S rRNA, where it nucleates assembly of the 50S subunit. The protein is Large ribosomal subunit protein uL3 of Halothermothrix orenii (strain H 168 / OCM 544 / DSM 9562).